A 101-amino-acid chain; its full sequence is Small ribosomal subunit protein bS6 (101 aa).

Belongs to the bacterial ribosomal protein bS6 family.

Its function is as follows. Binds together with bS18 to 16S ribosomal RNA. The chain is Small ribosomal subunit protein bS6 from Nitratidesulfovibrio vulgaris (strain DSM 19637 / Miyazaki F) (Desulfovibrio vulgaris).